The sequence spans 256 residues: Isoprenyl transferase (256 aa).

The active site involves Asp33. Residue Asp33 coordinates Mg(2+). Residues 34-37, Trp38, Arg46, His50, and 78-80 each bind substrate; these read GNGR and STE. The active-site Proton acceptor is the Asn81. Substrate-binding positions include Trp82, Arg84, Arg201, and 207-209; that span reads RIS. Mg(2+) is bound at residue Glu220.

The protein belongs to the UPP synthase family. As to quaternary structure, homodimer. Mg(2+) serves as cofactor.

Catalyzes the condensation of isopentenyl diphosphate (IPP) with allylic pyrophosphates generating different type of terpenoids. The polypeptide is Isoprenyl transferase (Staphylococcus epidermidis (strain ATCC 35984 / DSM 28319 / BCRC 17069 / CCUG 31568 / BM 3577 / RP62A)).